The sequence spans 328 residues: Malate dehydrogenase (328 aa).

11-17 (GAAGQIG) provides a ligand contact to NAD(+). Substrate is bound by residues Arg92 and Arg98. NAD(+) is bound by residues Asn105, Gln112, and 129-131 (TGN). Asn131 and Arg162 together coordinate substrate. Catalysis depends on His187, which acts as the Proton acceptor.

It belongs to the LDH/MDH superfamily. MDH type 2 family.

The catalysed reaction is (S)-malate + NAD(+) = oxaloacetate + NADH + H(+). Catalyzes the reversible oxidation of malate to oxaloacetate. This chain is Malate dehydrogenase, found in Paenarthrobacter aurescens (strain TC1).